The primary structure comprises 376 residues: Fibromodulin (376 aa).

The first 18 residues, 1–18, serve as a signal peptide directing secretion; sequence MQWASVLLLAGLCSLSQG. Glutamine 19 bears the Pyrrolidone carboxylic acid mark. Sulfotyrosine is present on residues tyrosine 20, tyrosine 38, tyrosine 53, tyrosine 55, tyrosine 63, and tyrosine 65. In terms of domain architecture, LRRNT spans 67 to 105; sequence APPPPEPRDCPQECDCPPNFPTAMYCDNRNLKYLPFVPS. LRR repeat units follow at residues 106 to 127, 130 to 151, 156 to 176, 177 to 198, 201 to 222, 224 to 245, 246 to 266, and 269 to 289; these read RMKYVYFQNNQISAIQEGVFDN, GLLWVALHGNQITSDKVGRKVF, HLERLYLDHNNLTRMPGPLPR, SLRELHLDHNQISRVPNNALEG, NLTALYLHHNEIQEVGSSMRGL, SLILLDLSYNHLRRVPDGLPSA, LEQLYLEHNNVYTVPDSYFRG, and KLLYVRLSHNSLTNNGLATNT. N-linked (GlcNAc...) (keratan sulfate) asparagine glycosylation occurs at asparagine 127. Asparagine 166 is a glycosylation site (N-linked (GlcNAc...) (keratan sulfate) asparagine). A glycan (N-linked (GlcNAc...) (keratan sulfate) asparagine) is linked at asparagine 201. A glycan (N-linked (GlcNAc...) (keratan sulfate) asparagine) is linked at asparagine 291. LRR repeat units follow at residues 294–315 and 316–335; these read SLLELDLSYNQLQKIPPVNTNL and ENLYLQGNRINEFSISSFCT. Cysteine 334 and cysteine 367 are oxidised to a cystine. N-linked (GlcNAc...) asparagine glycosylation is present at asparagine 341. One copy of the LRR 11 repeat lies at 344–367; it reads KLQVLRLDGNEIKRSAMPVDAPLC.

The protein belongs to the small leucine-rich proteoglycan (SLRP) family. SLRP class II subfamily. Binds to type I and type II collagen. Binds keratan sulfate chains. Post-translationally, sulfated on tyrosine residue(s). As to expression, highest levels observed in knee epiphysis, in calvarial and diaphyseal bone, in nasal and costal cartilage, in the eye, and in bladder. In mature knee joint it is mostly present in the proliferating zone of growth plate. It is also observed in ligaments, especially at insertion sites, in the junction between meniscus and joint capsule, in the perimysium of skeletal muscle and in the periosteum.

The protein resides in the secreted. It localises to the extracellular space. Its subcellular location is the extracellular matrix. Functionally, affects the rate of fibrils formation. May have a primary role in collagen fibrillogenesis. This chain is Fibromodulin (Fmod), found in Mus musculus (Mouse).